The following is a 254-amino-acid chain: 3-deoxy-manno-octulosonate cytidylyltransferase (254 aa).

This sequence belongs to the KdsB family.

It is found in the cytoplasm. It catalyses the reaction 3-deoxy-alpha-D-manno-oct-2-ulosonate + CTP = CMP-3-deoxy-beta-D-manno-octulosonate + diphosphate. Its pathway is nucleotide-sugar biosynthesis; CMP-3-deoxy-D-manno-octulosonate biosynthesis; CMP-3-deoxy-D-manno-octulosonate from 3-deoxy-D-manno-octulosonate and CTP: step 1/1. It functions in the pathway bacterial outer membrane biogenesis; lipopolysaccharide biosynthesis. In terms of biological role, activates KDO (a required 8-carbon sugar) for incorporation into bacterial lipopolysaccharide in Gram-negative bacteria. This is 3-deoxy-manno-octulosonate cytidylyltransferase from Pseudomonas fluorescens (strain ATCC BAA-477 / NRRL B-23932 / Pf-5).